Consider the following 361-residue polypeptide: Ribosomal RNA large subunit methyltransferase M (361 aa).

Residues Ser187, 220-223 (CPGG), Asp239, Asp259, and Asp276 each bind S-adenosyl-L-methionine. Lys305 serves as the catalytic Proton acceptor.

The protein belongs to the class I-like SAM-binding methyltransferase superfamily. RNA methyltransferase RlmE family. RlmM subfamily. In terms of assembly, monomer.

The protein resides in the cytoplasm. It catalyses the reaction cytidine(2498) in 23S rRNA + S-adenosyl-L-methionine = 2'-O-methylcytidine(2498) in 23S rRNA + S-adenosyl-L-homocysteine + H(+). Its function is as follows. Catalyzes the 2'-O-methylation at nucleotide C2498 in 23S rRNA. The protein is Ribosomal RNA large subunit methyltransferase M of Shewanella baltica (strain OS223).